The following is a 153-amino-acid chain: Arachidonate 5-lipoxygenase-activating protein (153 aa).

At methionine 1–asparagine 8 the chain is on the lumenal side. Residues valine 9–valine 30 traverse the membrane as a helical segment. At glutamate 31 to arginine 52 the chain is on the cytoplasmic side. The chain crosses the membrane as a helical span at residues valine 53–leucine 77. Topologically, residues cysteine 78–glutamine 80 are lumenal. Residues valine 81 to leucine 102 form a helical membrane-spanning segment. The Cytoplasmic segment spans residues glycine 103–glutamine 107. An intramembrane segment occupies serine 108–glycine 115. The chain crosses the membrane as a helical span at residues lysine 116 to alanine 128. Topologically, residues glycine 129 to threonine 153 are lumenal.

Belongs to the MAPEG family. Homotrimer. Interacts with LTC4S and ALOX5.

It localises to the nucleus membrane. It is found in the endoplasmic reticulum membrane. Required for leukotriene biosynthesis by ALOX5 (5-lipoxygenase). Anchors ALOX5 to the membrane. Binds arachidonic acid, and could play an essential role in the transfer of arachidonic acid to ALOX5. Binds to MK-886, a compound that blocks the biosynthesis of leukotrienes. This chain is Arachidonate 5-lipoxygenase-activating protein (ALOX5AP), found in Macaca mulatta (Rhesus macaque).